The sequence spans 892 residues: MERKEDDLKGGCWNQPAVAEEFETLKDLAMDFTVEDWKDLESEWDQRDLFWDVTLNHYQDMFSFTDTSQPSLTSQPDVREELEATSTEVPETKSSPLQSGFVEEDFSQIMEIFSNGQLNFEACIGEDWLNSFLGDPESLPRPDISDKESPADHQSPESKSGLSPGPPLCTREDAVMSASPEKTLTPVILKESRSDLSQEDSVQGHEKPYKCSECGESFSQSHHLIQHWVLHTSGEPPIWREQQRGLSQGAHFPMCPGTPASYESYTCQECGKRFSQNVYLQWHQKIHTGEKLCKTQSDSNLEGLSRSPSVEPGKQRLSKDTDSAKPSTIHGQDQEKPPTGESRDQENLHESQPGDRPSVLHPKPLRHQKTPTNAKCFRCKKCGETFSGAFHLAKHQRAHAQRLYKCASCPAVFNLSKHCFQHRKSHFPSAACECQGCRKSFNWRSSLIKHQAIHKGEKPYKCDECGKAFNHSSTLKIHQRIHSGQKPHKCSECGKAFCRRTDLTEHQRVHSGFRPHQCPVCARTFNRPSHLVRHRLRHAEERHFGCAKCKETFIYKEQLERHNKIHTIEGLYECKQCGEHFICRSTLNCHLSIHIRENTSEKVVGQNSQHTEKCFKNTKCRKAPNHSRYLGQHEKIHAQVTSGECDPCGETYDQSVQPICHQSICAGVKPSECAEPEKCTRNTSASEHHPSQREPSFKCDIYNRAFKQRAHLSKHQLIHITEKPFKCNECDRAFKQSNYLIQHQKTHTAEKHFECSECGKTFHQRSCLSKHQKIHSGEKPFKCGDCGKAFISGAQLIRHQRIHTGEKPYVCQECGKTFSQSSCLTLHLRIHTGEKPYTCGTCGKAFAQRANQRKHERIHTGEKPYACGLCGKAFGLRTHLQQHQRIHTKAKP.

The KRAB domain maps to 23–101 (ETLKDLAMDF…TKSSPLQSGF (79 aa)). Composition is skewed to polar residues over residues 66–76 (DTSQPSLTSQP) and 84–97 (ATST…SSPL). Disordered regions lie at residues 66–97 (DTSQ…SSPL) and 134–203 (GDPE…DSVQ). Composition is skewed to basic and acidic residues over residues 138-156 (SLPR…HQSP) and 190-203 (KESR…DSVQ). 2 consecutive C2H2-type zinc fingers follow at residues 209–231 (YKCS…WVLH) and 265–287 (YTCQ…QKIH). The span at 297–308 (SDSNLEGLSRSP) shows a compositional bias: polar residues. The disordered stretch occupies residues 297 to 370 (SDSNLEGLSR…HPKPLRHQKT (74 aa)). Composition is skewed to basic and acidic residues over residues 313-323 (GKQRLSKDTDS) and 332-353 (QDQE…ESQP). 8 C2H2-type zinc fingers span residues 377 to 399 (FRCK…QRAH), 404 to 426 (YKCA…RKSH), 432 to 454 (CECQ…QAIH), 460 to 482 (YKCD…QRIH), 488 to 510 (HKCS…QRVH), 516 to 538 (HQCP…RLRH), 544 to 566 (FGCA…NKIH), and 572 to 594 (YECK…LSIH). K476 participates in a covalent cross-link: Glycyl lysine isopeptide (Lys-Gly) (interchain with G-Cter in SUMO2). Residue K602 forms a Glycyl lysine isopeptide (Lys-Gly) (interchain with G-Cter in SUMO2) linkage. A C2H2-type 11; degenerate zinc finger spans residues 697–719 (FKCDIYNRAFKQRAHLSKHQLIH). C2H2-type zinc fingers lie at residues 725–747 (FKCN…QKTH), 753–775 (FECS…QKIH), 781–803 (FKCG…QRIH), 809–831 (YVCQ…LRIH), 837–859 (YTCG…ERIH), and 865–887 (YACG…QRIH).

The protein belongs to the krueppel C2H2-type zinc-finger protein family. In terms of assembly, interacts with the SLBP/pre-mRNA complex but not with SLBP alone. Interacts with LSM11 in a U7 snRNP-dependent manner.

It is found in the nucleus. Its function is as follows. Involved in histone 3'-end pre-mRNA processing by associating with U7 snRNP and interacting with SLBP/pre-mRNA complex. Increases histone 3'-end pre-mRNA processing but has no effect on U7 snRNP levels, when overexpressed. Required for cell cycle progression from G1 to S phases. This Mus musculus (Mouse) protein is Zinc finger protein 473 homolog (Znf473).